Here is a 199-residue protein sequence, read N- to C-terminus: Early activation antigen CD69 (199 aa).

A compositionally biased stretch (polar residues) spans 1 to 14 (MDSENCSITENSSS). Residues 1 to 20 (MDSENCSITENSSSHLERGQ) form a disordered region. At 1–40 (MDSENCSITENSSSHLERGQKDHGTSIHFEKHHEGSIQVS) the chain is on the cytoplasmic side. The helical; Signal-anchor for type II membrane protein transmembrane segment at 41–61 (IPWAVLIVVLITSLIIALIAL) threads the bilayer. Over 62 to 199 (NVGKYNCPGL…FHWVCSKPSR (138 aa)) the chain is Extracellular. Intrachain disulfides connect cysteine 85/cysteine 96, cysteine 113/cysteine 194, and cysteine 173/cysteine 186. Residues 92-195 (YKRTCYFFST…CEANFHWVCS (104 aa)) form the C-type lectin domain. N-linked (GlcNAc...) asparagine glycans are attached at residues asparagine 150, asparagine 166, and asparagine 180.

As to quaternary structure, homodimer; disulfide-linked. Interacts with S100A8 and S100A9. Interacts with galactin-1/LGALS1. Interacts with S1PR1; this interaction mediates S1PR1 degradation. Interacts with JAK3 and STAT5. Constitutive Ser/Thr phosphorylation in both mature thymocytes and activated T-lymphocytes. Expressed on the surface of activated T-cells, B-cells, natural killer cells, neutrophils and platelets. Present also in eosinophils.

It is found in the cell membrane. Transmembrane protein expressed mainly on T-cells resident in mucosa that plays an essential role in immune cell homeostasis. Rapidly expressed on the surface of platelets, T-lymphocytes and NK cells upon activation by various stimuli, such as antigen recognition or cytokine signaling, stimulates different signaling pathways in different cell types. Negatively regulates Th17 cell differentiation through its carbohydrate dependent interaction with galectin-1/LGALS1 present on immature dendritic cells. Association of CD69 cytoplasmic tail with the JAK3/STAT5 signaling pathway regulates the transcription of RORgamma/RORC and, consequently, differentiation toward the Th17 lineage. Also acts via the S100A8/S100A9 complex present on peripheral blood mononuclear cells to promote the conversion of naive CD4 T-cells into regulatory T-cells. Acts as an oxidized low-density lipoprotein (oxLDL) receptor in CD4 T-lymphocytes and negatively regulates the inflammatory response by inducing the expression of PDCD1 through the activation of NFAT. Participates in adipose tissue-derived mesenchymal stem cells (ASCs)-mediated protection against P.aeruginosa infection. Mechanistically, specifically recognizes P.aeruginosa to promote ERK1 activation, followed by granulocyte-macrophage colony-stimulating factor (GM-CSF) and other inflammatory cytokines secretion. In eosinophils, induces IL-10 production through the ERK1/2 pathway. Negatively regulates the chemotactic responses of effector lymphocytes and dendritic cells (DCs) to sphingosine 1 phosphate/S1P by acting as a S1PR1 receptor agonist and facilitating the internalization and degradation of the receptor. The chain is Early activation antigen CD69 (Cd69) from Mus musculus (Mouse).